The primary structure comprises 391 residues: Formate-dependent phosphoribosylglycinamide formyltransferase (391 aa).

N(1)-(5-phospho-beta-D-ribosyl)glycinamide-binding positions include 20–21 (EL) and Glu80. Residues Arg112, Lys153, 158–163 (SSGKGQ), 193–196 (EGFI), and Glu201 each bind ATP. An ATP-grasp domain is found at 117–306 (RLAAETLGLP…EFALHVRAIQ (190 aa)). 2 residues coordinate Mg(2+): Glu265 and Glu277. N(1)-(5-phospho-beta-D-ribosyl)glycinamide-binding positions include Asp284, Lys354, and 361–362 (RR).

It belongs to the PurK/PurT family. As to quaternary structure, homodimer.

It carries out the reaction N(1)-(5-phospho-beta-D-ribosyl)glycinamide + formate + ATP = N(2)-formyl-N(1)-(5-phospho-beta-D-ribosyl)glycinamide + ADP + phosphate + H(+). The protein operates within purine metabolism; IMP biosynthesis via de novo pathway; N(2)-formyl-N(1)-(5-phospho-D-ribosyl)glycinamide from N(1)-(5-phospho-D-ribosyl)glycinamide (formate route): step 1/1. Functionally, involved in the de novo purine biosynthesis. Catalyzes the transfer of formate to 5-phospho-ribosyl-glycinamide (GAR), producing 5-phospho-ribosyl-N-formylglycinamide (FGAR). Formate is provided by PurU via hydrolysis of 10-formyl-tetrahydrofolate. This is Formate-dependent phosphoribosylglycinamide formyltransferase from Shewanella baltica (strain OS185).